Consider the following 1428-residue polypeptide: MAKKKSKASNSARGYATTSIPSRSASSPANKNQVKGEKNNKTQKVEPKNAFKVENQSNDIGVDTVDAFDHLLLDKTLPTIDAETEVIKNTSLSNSKSFLHSWQTDIRLRKNDNVLGLTEDEIQQILKTFRDSWKSSLKESYAFSNRSSFSLRKRYLWTTFLSLKGMGFEESEIFGAFSSIPIVSIDEYITWMITENLINSEPSNSSFSYEVQPSNYTTFCRMLDEPLPANNPVQSNSRLVPLMKDFSNDIKHTPNKETQPSNQVDDSLKSKDSKPLTMSEVLTQLPEDDIPFDDPFDLTSQYVKVKLKMLRLQIANKKNSEEFSTLNLQLESITSQYLFSSKEAEIVFRKSRIEFMNKLKALQQKLENERIVEEIKKNGIQEDSQSTDDSSKDDDNNSESNDMSPHNDAETRADDDAYLMGDLFNQEEEDIQDTENDLLNANYTLLPLTTDKSGTRPSTTLQYELHKIGSNIKAEFKTMPIGKIGYQSTCFVRCSTGQKTFSDLKTVLPTATLAADYISMIVLFRLMANFTKISLQTFPKSFKEVYGKFSAEKQNTDLAEDAKISEKLDSIIKSKELETPTSATTSKLMAPMDNIGKFSGFERPPETLLNKWRQQLESESAEKFKVFRNQLPATMFRETIIDAVNNSQLLIISGDTGCGKSTQIPAFLLENSTKNGKAVKIYVTEPRRISAISLANRVSQELGGNPPSARSHELVGYSVRLDSKCTPLTPLTYVTTGTFLRLLEVGNEIESVTHLIIDEVHERSIDSDLLLIHVLHLLKQHPHLKIIIMSATLNAEKFQLYFEGSNLITIPGKTYPVHRFYLEDILSQFGNDKSFGNAAGQDVIEEDDYETDQQDASISNKSAEDAIVEMNLIPAWYNEKAINYGLIVYLLKYIFTEGDPKFSKCVLVFLPGISEILRVKSLIEDMPMFRNHRKFCIYMLHSTLSSAQQQSVFNIPPKGCRKIVLSTNIAETGVTIPDVTCVIDTGVHREMRYNSRRHLSRLTDTFVSKANAKQRSGRAGRVQEGICYHLFSKFKHDTQFLSYQTPEILRLNLQEVVLRVKMCQMGDVQDVLGKALDPPSSTNIIRALEKLHQVGALSENEKLTKLGKFLSQLPVDANLGKILVLGCFYKCVDAASSIVAMLTIGSPFRKSVDNEFSANKARLSFAKENTRSDLVLMYYAYCAWREICLSPLGPDEDSFAKEKYLNLEALSMTESLKIQLLSELKDMKLLGASDVDTCKSLKRSICRRFAVIPKEHDINSGNAEILCGVIAASLYPNILRYDYEKRQWSTLSTNKRVRILDVSVNNRSELPNMPSKFVAYTNMMSSTRASEYVNETTMVTLRQLLMMCGLKVENRVSVGQAKLDNFTVYFENVYVSASLSILRRFIETSLNEFFAEPDKRLLNSHLEVIVNIVSRLNYGTKFQKRLKD.

Disordered stretches follow at residues 1–53 (MAKK…AFKV), 249–274 (DIKH…KDSK), and 377–413 (KNGI…ETRA). Positions 16–33 (ATTSIPSRSASSPANKNQ) are enriched in polar residues. Residues 34 to 51 (VKGEKNNKTQKVEPKNAF) show a composition bias toward basic and acidic residues. Over residues 256 to 265 (KETQPSNQVD) the composition is skewed to polar residues. The Helicase ATP-binding domain maps to 641 to 811 (IDAVNNSQLL…FEGSNLITIP (171 aa)). 654–661 (GDTGCGKS) lines the ATP pocket. The short motif at 758 to 761 (DEVH) is the DEAH box element. A Helicase C-terminal domain is found at 886-1064 (LIVYLLKYIF…EVVLRVKMCQ (179 aa)).

The protein belongs to the helicase family. SKI2 subfamily.

The protein localises to the cytoplasm. This is an uncharacterized protein from Schizosaccharomyces pombe (strain 972 / ATCC 24843) (Fission yeast).